Consider the following 409-residue polypeptide: Phenoxybenzoate dioxygenase subunit alpha (409 aa).

The Rieske domain maps to 45–149 (WQPVALSADV…VEERYGLVFA (105 aa)). Positions 85, 87, 104, and 107 each coordinate [2Fe-2S] cluster. Residues His-210 and His-215 each contribute to the Fe cation site.

The protein belongs to the bacterial ring-hydroxylating dioxygenase alpha subunit family. As to quaternary structure, this dioxygenase system consists of two proteins: the alpha subunit (PobA) and a subunit (PobB) that acts as a ferredoxin and a ferredoxin reductase. It depends on [2Fe-2S] cluster as a cofactor. Fe cation serves as cofactor.

It functions in the pathway aromatic compound metabolism; carboxydiphenyl ether degradation. In terms of biological role, degrades exclusively diarylether compounds having carboxyl groups in the 3- or 4-position. Yields a hemiacetal that spontaneously hydrolyzes to phenol and protocatechuate. This is Phenoxybenzoate dioxygenase subunit alpha (pobA) from Ectopseudomonas oleovorans (Pseudomonas oleovorans).